The following is a 377-amino-acid chain: uncharacterized protein (377 aa).

Residue 32–39 coordinates ATP; it reads GPINSGKT.

It belongs to the archaeal ATPase family.

This is an uncharacterized protein from Methanocaldococcus jannaschii (strain ATCC 43067 / DSM 2661 / JAL-1 / JCM 10045 / NBRC 100440) (Methanococcus jannaschii).